The following is a 153-amino-acid chain: Suppressor of RNA silencing (153 aa).

The interval methionine 1–cysteine 23 is C-1. Residues methionine 1 to histidine 85 form an interaction with TGB1 region. A basic motif (BM) region spans residues cysteine 19–proline 47. The C-2 stretch occupies residues cysteine 60–histidine 85. The segment at alanine 86–valine 127 is interaction with replication protein alpha-A. The stretch at leucine 92 to lysine 132 forms a coiled coil. Phosphoserine is present on serine 96.

The protein belongs to the virgaviridae suppressor of RNA silencing family. Homooligomer. Interacts (via C-terminus) with replication protein alpha-A. Interacts (via N-terminus) with the movement protein TGB1; this interaction targets gammab-TGB1 at the periphery of chloroplasts and plasmodesmata. Interacts with host autophagy protein ATG7; this interaction disrupts the host ATG7-ATG8 interaction to promote viral infection. Interacts (via BM region) with host STY46; this interaction inhibits the viral infection. Post-translationally, phosphorylated at Ser-96 by a host PKA-like kinase; the phosphorylation at this site seems to suppress host cell death. Serine-phosphorylated by host STY46 kinase.

The protein localises to the host chloroplast envelope. It localises to the host endoplasmic reticulum. Its subcellular location is the host cell junction. It is found in the host plasmodesma. Functionally, suppressor of RNA-mediated gene silencing, also known as post-transcriptional gene silencing (PTGS), a mechanism of plant viral defense that limits the accumulation of viral RNAs. Promotes viral cell-to-cell long distance movement by enhancing the ATPase activity of TGB1. Enhances RNA helicase activity of replication protein alpha-A. Suppresses autophagy induced by the host as a defense mechanism against viral infection. This is Suppressor of RNA silencing from Barley stripe mosaic virus (BSMV).